A 116-amino-acid polypeptide reads, in one-letter code: Ribonuclease P protein component (116 aa).

The protein belongs to the RnpA family. As to quaternary structure, consists of a catalytic RNA component (M1 or rnpB) and a protein subunit.

The enzyme catalyses Endonucleolytic cleavage of RNA, removing 5'-extranucleotides from tRNA precursor.. Its function is as follows. RNaseP catalyzes the removal of the 5'-leader sequence from pre-tRNA to produce the mature 5'-terminus. It can also cleave other RNA substrates such as 4.5S RNA. The protein component plays an auxiliary but essential role in vivo by binding to the 5'-leader sequence and broadening the substrate specificity of the ribozyme. This Carboxydothermus hydrogenoformans (strain ATCC BAA-161 / DSM 6008 / Z-2901) protein is Ribonuclease P protein component.